Consider the following 312-residue polypeptide: Glyoxylate/hydroxypyruvate reductase A (312 aa).

The active site involves arginine 227. Histidine 275 acts as the Proton donor in catalysis.

Belongs to the D-isomer specific 2-hydroxyacid dehydrogenase family. GhrA subfamily.

The protein localises to the cytoplasm. It catalyses the reaction glycolate + NADP(+) = glyoxylate + NADPH + H(+). The enzyme catalyses (R)-glycerate + NAD(+) = 3-hydroxypyruvate + NADH + H(+). The catalysed reaction is (R)-glycerate + NADP(+) = 3-hydroxypyruvate + NADPH + H(+). Catalyzes the NADPH-dependent reduction of glyoxylate and hydroxypyruvate into glycolate and glycerate, respectively. The protein is Glyoxylate/hydroxypyruvate reductase A of Salmonella heidelberg (strain SL476).